We begin with the raw amino-acid sequence, 320 residues long: Acetyl-coenzyme A carboxylase carboxyl transferase subunit alpha (320 aa).

One can recognise a CoA carboxyltransferase C-terminal domain in the interval 42–295 (IGDKAAQALK…GDAIAEAFND (254 aa)).

The protein belongs to the AccA family. In terms of assembly, acetyl-CoA carboxylase is a heterohexamer composed of biotin carboxyl carrier protein (AccB), biotin carboxylase (AccC) and two subunits each of ACCase subunit alpha (AccA) and ACCase subunit beta (AccD).

Its subcellular location is the cytoplasm. It catalyses the reaction N(6)-carboxybiotinyl-L-lysyl-[protein] + acetyl-CoA = N(6)-biotinyl-L-lysyl-[protein] + malonyl-CoA. Its pathway is lipid metabolism; malonyl-CoA biosynthesis; malonyl-CoA from acetyl-CoA: step 1/1. In terms of biological role, component of the acetyl coenzyme A carboxylase (ACC) complex. First, biotin carboxylase catalyzes the carboxylation of biotin on its carrier protein (BCCP) and then the CO(2) group is transferred by the carboxyltransferase to acetyl-CoA to form malonyl-CoA. This is Acetyl-coenzyme A carboxylase carboxyl transferase subunit alpha from Nitrobacter hamburgensis (strain DSM 10229 / NCIMB 13809 / X14).